The chain runs to 446 residues: MRYLPLTPEDRAEMLARIGVASVDELFVDIPADKRETALPRLALHKSELEVERTLARLAGQNVPAGSVPFFVGAGAYRHHVPATVDHLIQRSEFLTSYTPYQPEIAQGTLQYLFEFQTQVAELTAMEVANASMYDGSTAAAEAVLMAHRVTRRRKAVLAGNLHPHYRSTIETVSRYAADEVVALPPAPFGEEDLITPIDDTVSCVVVQSPDVFGNLVDLKPIAEAAHKAGALLVAVFTEAVALGLIEPPGAQGADIVVGEGQSIGNALNFGGPYVGLFATRQKFVRQMPGRLAGETVDAEGRRGFVLTLSTREQHIRREKATSNICTNSGLCALAFTIHMSLLGKTGLTRLARANHAAACDLADRLAAVKGASVVNDTFFNEFTLRVPGPAADVVEKLAAKGILAGVPYSRLAPKSGLDDLILVAATETTTEDDRAAYAAALKEVL.

The protein belongs to the GcvP family. N-terminal subunit subfamily. In terms of assembly, the glycine cleavage system is composed of four proteins: P, T, L and H. In this organism, the P 'protein' is a heterodimer of two subunits.

It catalyses the reaction N(6)-[(R)-lipoyl]-L-lysyl-[glycine-cleavage complex H protein] + glycine + H(+) = N(6)-[(R)-S(8)-aminomethyldihydrolipoyl]-L-lysyl-[glycine-cleavage complex H protein] + CO2. In terms of biological role, the glycine cleavage system catalyzes the degradation of glycine. The P protein binds the alpha-amino group of glycine through its pyridoxal phosphate cofactor; CO(2) is released and the remaining methylamine moiety is then transferred to the lipoamide cofactor of the H protein. This Xanthobacter autotrophicus (strain ATCC BAA-1158 / Py2) protein is Probable glycine dehydrogenase (decarboxylating) subunit 1.